The chain runs to 342 residues: Protein-ribulosamine 3-kinase, chloroplastic (342 aa).

The N-terminal 46 residues, 1-46, are a transit peptide targeting the chloroplast; it reads MANVALLSAASPSTSSAAPRLRHVARRRPSRRSACPRSAASRLSIM. ATP is bound at residue 141–143; the sequence is EFI. Asp-246 acts as the Proton acceptor in catalysis.

The protein belongs to the fructosamine kinase family.

It localises to the plastid. The protein localises to the chloroplast. It catalyses the reaction N(6)-D-ribulosyl-L-lysyl-[protein] + ATP = N(6)-(3-O-phospho-D-ribulosyl)-L-lysyl-[protein] + ADP + H(+). It carries out the reaction N(6)-(D-erythrulosyl)-L-lysyl-[protein] + ATP = N(6)-(3-O-phospho-D-erythrulosyl)-L-lysyl-[protein] + ADP + H(+). Initiates a process leading to the deglycation of proteins. Phosphorylates low-molecular-mass and protein-bound erythrulosamines and ribulosamines, but not fructosamines or psicosamines, on the third carbon of the sugar moiety. Protein-bound erythrulosamine 3-phosphates and ribulosamine 3-phosphates are unstable and decompose under physiological conditions. The protein is Protein-ribulosamine 3-kinase, chloroplastic of Oryza sativa subsp. japonica (Rice).